The following is an 890-amino-acid chain: Translation initiation factor IF-2 (890 aa).

Residues Leu45 to Ala303 are disordered. Positions Ser67–Val81 are enriched in polar residues. Over residues Val92–Asp217 the composition is skewed to basic and acidic residues. Basic residues predominate over residues Gly252 to Asn266. Residues Lys267 to Ala280 show a composition bias toward basic and acidic residues. Positions Pro389 to Lys558 constitute a tr-type G domain. Residues Gly398–Thr405 are G1. Gly398–Thr405 contributes to the GTP binding site. A G2 region spans residues Gly423–His427. Residues Asp444–Gly447 form a G3 region. GTP contacts are provided by residues Asp444–His448 and Asn498–Asp501. Residues Asn498–Asp501 are G4. The tract at residues Ser534–Lys536 is G5. An N6-acetyllysine modification is found at Lys808.

This sequence belongs to the TRAFAC class translation factor GTPase superfamily. Classic translation factor GTPase family. IF-2 subfamily.

The protein resides in the cytoplasm. In terms of biological role, one of the essential components for the initiation of protein synthesis. Protects formylmethionyl-tRNA from spontaneous hydrolysis and promotes its binding to the 30S ribosomal subunits. Also involved in the hydrolysis of GTP during the formation of the 70S ribosomal complex. The polypeptide is Translation initiation factor IF-2 (Shigella boydii serotype 18 (strain CDC 3083-94 / BS512)).